Here is a 208-residue protein sequence, read N- to C-terminus: dITP/XTP pyrophosphatase (208 aa).

A substrate-binding site is contributed by 7 to 12 (SNNAKK). Positions 39 and 68 each coordinate Mg(2+). Residue D68 is the Proton acceptor of the active site. Residues S69, 162–165 (FGYD), K185, and 190–191 (HR) contribute to the substrate site.

It belongs to the HAM1 NTPase family. As to quaternary structure, homodimer. Mg(2+) is required as a cofactor.

The enzyme catalyses XTP + H2O = XMP + diphosphate + H(+). It carries out the reaction dITP + H2O = dIMP + diphosphate + H(+). The catalysed reaction is ITP + H2O = IMP + diphosphate + H(+). Pyrophosphatase that catalyzes the hydrolysis of nucleoside triphosphates to their monophosphate derivatives, with a high preference for the non-canonical purine nucleotides XTP (xanthosine triphosphate), dITP (deoxyinosine triphosphate) and ITP. Seems to function as a house-cleaning enzyme that removes non-canonical purine nucleotides from the nucleotide pool, thus preventing their incorporation into DNA/RNA and avoiding chromosomal lesions. This chain is dITP/XTP pyrophosphatase, found in Methylibium petroleiphilum (strain ATCC BAA-1232 / LMG 22953 / PM1).